Reading from the N-terminus, the 354-residue chain is Transcription factor ATOH1 (354 aa).

A compositionally biased stretch (basic and acidic residues) spans 1–21 (MSRLLHAEEWAEVKELGDHHR). Disordered regions lie at residues 1–55 (MSRL…ELSL) and 91–122 (EAAAPRDEVDGRGELVRRSSGGASSSKSPGPV). The span at 26 to 38 (HHLPQPPPPPQPP) shows a compositional bias: pro residues. The segment covering 94–107 (APRDEVDGRGELVR) has biased composition (basic and acidic residues). Residues 108–122 (RSSGGASSSKSPGPV) show a composition bias toward low complexity. One can recognise a bHLH domain in the interval 159–211 (QRRLAANARERRRMHGLNHAFDQLRNVIPSFNNDKKLSKYETLQMAQIYINAL). 2 disordered regions span residues 216–277 (QTPS…TRFS) and 312–354 (SPSL…DEAS). Low complexity predominate over residues 250–264 (NATAAGAQQASGGSQ). Over residues 335–354 (HRSDGEFSPHSHYSDSDEAS) the composition is skewed to basic and acidic residues.

As to quaternary structure, efficient DNA binding requires dimerization with another bHLH protein.

The protein resides in the nucleus. Functionally, transcriptional regulator. Activates E box-dependent transcription in collaboration with TCF3/E47, but the activity is completely antagonized by the negative regulator of neurogenesis HES1. Plays a role in the differentiation of subsets of neural cells by activating E box-dependent transcription. This is Transcription factor ATOH1 from Homo sapiens (Human).